An 872-amino-acid polypeptide reads, in one-letter code: Sine oculis-binding protein homolog (872 aa).

Residues 1 to 14 (MAEMEKEGRPPENK) show a composition bias toward basic and acidic residues. Residues 1–26 (MAEMEKEGRPPENKRSRKPAHPVKRE) are disordered. 2 FCS-type zinc fingers span residues 142–180 (DDVS…KCFA) and 216–256 (FKNN…KCLN). 3 disordered regions span residues 308 to 354 (RRKA…KSMP), 411 to 484 (FIRG…PGAP), and 550 to 619 (KPPN…GRSE). Polar residues predominate over residues 319 to 344 (GQSQGPGPSASTTVSPSDTANCSVTK). Over residues 417 to 433 (HHASNPNSPLSNPMLPG) the composition is skewed to low complexity. Over residues 460-484 (IHPPSTPTMPGNPPGLLPPPPPGAP) the composition is skewed to pro residues. Residues 620-624 (VVDLT) carry the SUMO interaction motif 1 (SIM); mediates the binding to polysumoylated substrates motif. S629 carries the phosphoserine modification. Positions 651-655 (VIDLT) match the SUMO interaction motif 2 (SIM); mediates the binding to polysumoylated substrates motif. Residue K675 forms a Glycyl lysine isopeptide (Lys-Gly) (interchain with G-Cter in SUMO2) linkage. S697 is modified (phosphoserine). Positions 728–770 (AAEGAKGAEPPPEQPPPPPPPPPAPPKKLLSPEEPAVSELESV) are disordered. Residues 736–753 (EPPPEQPPPPPPPPPAPP) show a composition bias toward pro residues.

It belongs to the SOBP family. Interacts (via SIM domains) with SUMO1 and SUMO2.

In terms of biological role, implicated in development of the cochlea. This Bos taurus (Bovine) protein is Sine oculis-binding protein homolog.